The primary structure comprises 504 residues: Protein DETOXIFICATION 38 (504 aa).

12 helical membrane passes run 56–76 (LLLRLALPAILVYLINGGMGI), 90–110 (LAAASIGNSSFSLVYALMLGM), 139–159 (IVLALVGFPMTILYTFSYPIL), 170–190 (YMGSLYIAGLIPQIFAYAVYF), 208–228 (ISAAALVLQISLTWITVYAMG), 234–254 (IAYVLTISWWFIVGAQTFYVI), 273–295 (GLWSFFKLSAGSAVMICLELWYT), 316–336 (SICMSISALSFMVSVGFNAAV), 356–376 (TWTATFVSFVISVVEALVVIA), 401–421 (FLAVTIILNGIQPVLSGVAVG), 433–453 (IGCYYIVGIPIGCILGFTFNF), and 457–477 (GIWTGMIGGTLMQTLILLYVT).

Belongs to the multi antimicrobial extrusion (MATE) (TC 2.A.66.1) family.

It localises to the membrane. This Arabidopsis thaliana (Mouse-ear cress) protein is Protein DETOXIFICATION 38.